A 1280-amino-acid polypeptide reads, in one-letter code: MGKEQELLEAARTGNVGLVEKLLSGKKGLLGSGSGSIPLPGLLSMWRGLNVNCVDGSGYTPLHHASLNGHRDVVLKLLQFEASTNVSDSKGCFPLHLAAWRGDVDIVQILIHHGPSHSRVNEQNLEKETALHCAAQYGHSEVVRVLLQELTDPSMRNSRGETPLDLAALYGRLQVVRMLLTAHPNLMSCNTRKHTPLHLAARNGHYATVQVLLEADMDVNTQTEKGSALHEAALFGKMDVVQLLLDSGIDANIRDCQGRTALDILREHPSQKSQQIASLIHDYMMSDCDRGNFHEDLARHRPIPTPRTSIPSPVPSPSLRHKNDAVTGELSKLLNEIKICRDKDCSFEELCQTISSHSQSMESFGSGRLSDEERNGTLTRINKRPTPPLPPALEEEEKSCGPSGLWEALTPCNGCRNLGFSQDKRCVEIAHSPSLDVFLPEDEDNPYESVATAVTRKPCSLDINLHNACPRNGHFSHVSVSDAERGNHGDDSTGLTPDCSPPSPDTALRNIERVIRPQPKQRTSLSSSQDVQKPLQNHSGDPSEVSSSLGYASFSTSPPASPPISPANCSTGSAEDYALTDEATYQKECIERDDRRNSHVPEQFAGLLHGSSPACESPDNPYQLYGKVRKFSVPEPPLRHGNFLRAPEYSPPFPRTGSEASALKTQREVKPQVVYRTIFHTRVNQGPVTFGEQVDKTTGVHARNGEARSNCTGGSSPANSNTGYEERACTLGRMRSMPKNVLDLQLSRNFSKSDSNLVAVSPIEEEQWGSRGQSSPGKSSPSRLERTPSFTAEWEEIDKIMSSIGAGIGTEMEGITEDHPGPRCPVQSVGQWLDNIGLVQYENHLLSNGFDNVQFMGSNVVEDQDLLEIGILNSAHRQRLLQAIRLLPRVRPIGYDGNNPTSVAEWLESLELGDYTKSFLINGYTSMELVKKIWEIELINVLKINLIGHRKRILASLGDRLHEDPPQKPPRAISLREPTGNHTPPQLSPSLSQAYPNAGSLDVQHLIMQADARRRRNDNYFEDVPRSKLERQMAQVSMQGEWCEPITLRPPNEATSSTPVQYWQHHPEKLIFQSCDYEAYYLGSMLVKELRGTESTHDACAKMRSTEQMKKIPTIVLSVSYKGVKFIDATNKNIIAEHEIRNISCAAQDPEDLSTFAYITKDLKSSHHYCHVFTAFDVNLAYEIILTLGQAFEVAYQLALQARKSGHGSSTLPESFDSKPSKPVPKPRGNIRKSMEQPSMDQKGHANVPWIVEPGQEAKRGANTKAMADAHVYYSGIQRM.

ANK repeat units lie at residues 2-31 (GKEQ…GLLG), 57-86 (SGYT…STNV), 90-119 (KGCF…SHSR), 126-155 (EKET…DPSM), 159-188 (RGET…NLMS), 192-221 (RKHT…DVNT), and 224-253 (EKGS…DANI). 5 disordered regions span residues 299-322 (RHRP…LRHK), 361-399 (MESF…EEKS), 479-573 (SVSD…STGS), 704-723 (NGEA…SNTG), and 755-791 (SNLV…PSFT). The segment covering 482 to 491 (DAERGNHGDD) has biased composition (basic and acidic residues). Composition is skewed to polar residues over residues 520-550 (KQRT…SSLG), 707-723 (ARSN…SNTG), and 770-782 (SRGQ…SSPS). SAM domains are found at residues 824-890 (CPVQ…LPRV) and 898-963 (NNPT…RLHE). 2 disordered regions span residues 960–994 (RLHE…LSQA) and 1208–1243 (GSST…MDQK). Polar residues predominate over residues 980–994 (GNHTPPQLSPSLSQA). The region spanning 1071–1223 (IFQSCDYEAY…ESFDSKPSKP (153 aa)) is the PID domain.

It is found in the cytoplasm. This chain is Ankyrin repeat and sterile alpha motif domain-containing protein 1B (anks1b), found in Danio rerio (Zebrafish).